Reading from the N-terminus, the 305-residue chain is MELIFLGTSAGVPTRSRNVTAILLDLQHPTRAGLWLFDCGEGTQHQLLHTAYHPGKLDKIFITHLHGDHVFGLPGLLCSRSMAGNVNPLTIFGPAGIREFTETALRLSGSWTDYPLEIVEVSEGVVFKDEQYTVTAGALNHPVECYGYRIEEHDKPGALDAAALIADGIKPGPLFQRLKHGDTVTLEDGRIVNGQDYLSAPQPGKKLVIFGDTAPCPAALALARNADVLVHEVTLEAAMEEKANSRGHSSTRQAAQLARDASVGKLLVTHISSRYDAQGCESLLKECRAVFPECELAQDFMQVCV.

Positions 64, 66, 68, 69, 141, 212, and 270 each coordinate Zn(2+). Asp68 functions as the Proton acceptor in the catalytic mechanism.

It belongs to the RNase Z family. RNase BN subfamily. As to quaternary structure, homodimer. Zn(2+) is required as a cofactor.

Zinc phosphodiesterase, which has both exoribonuclease and endoribonuclease activities. This chain is Ribonuclease BN, found in Enterobacter sp. (strain 638).